Reading from the N-terminus, the 98-residue chain is NADH-ubiquinone oxidoreductase chain 4L (98 aa).

3 consecutive transmembrane segments (helical) span residues 1–21, 26–46, and 61–81; these read MPSISTNIILAFTTALLGVLI, LMSSLLCLEGMMLSMFILVSL, and IILLVFAACEAAVGLALLVMV.

It belongs to the complex I subunit 4L family. In terms of assembly, core subunit of respiratory chain NADH dehydrogenase (Complex I) which is composed of 45 different subunits.

It is found in the mitochondrion inner membrane. It carries out the reaction a ubiquinone + NADH + 5 H(+)(in) = a ubiquinol + NAD(+) + 4 H(+)(out). Functionally, core subunit of the mitochondrial membrane respiratory chain NADH dehydrogenase (Complex I) which catalyzes electron transfer from NADH through the respiratory chain, using ubiquinone as an electron acceptor. Part of the enzyme membrane arm which is embedded in the lipid bilayer and involved in proton translocation. The polypeptide is NADH-ubiquinone oxidoreductase chain 4L (MT-ND4L) (Galago senegalensis (Northern lesser bushbaby)).